The chain runs to 297 residues: GATA transcription factor 24 (297 aa).

One can recognise a Tify domain in the interval 73–108 (GIENGDQLTLSFQGQVYVFDRVSPEKVQAVLLLLGG). Residues 143-185 (RLASLLRFREKRKGRNFDKTIRYTVRKEVALRMQRKKGQFTSA) form the CCT domain. The disordered stretch occupies residues 178 to 203 (KKGQFTSAKSSNDDSGSTGSDWGSNQ). Residues 190 to 201 (DDSGSTGSDWGS) show a composition bias toward low complexity. A GATA-type zinc finger spans residues 213 to 269 (QKPEVLCRHCGTSEKSTPMMRRGPDGPRTLCNACGLMWANKGTLRDLSKVPPPQTPQ).

It belongs to the type IV zinc-finger family. Class C subfamily. In terms of tissue distribution, predominantly expressed in shoot apices, inflorescences and roots.

Its subcellular location is the nucleus. Its function is as follows. Transcriptional activator that specifically binds 5'-GATA-3' or 5'-GAT-3' motifs within gene promoters. This chain is GATA transcription factor 24 (GATA24), found in Arabidopsis thaliana (Mouse-ear cress).